We begin with the raw amino-acid sequence, 275 residues long: Phosphonoacetaldehyde hydrolase (275 aa).

D15 serves as the catalytic Nucleophile. Mg(2+)-binding residues include D15 and A17. The Schiff-base intermediate with substrate role is filled by K56. D189 is a binding site for Mg(2+).

The protein belongs to the HAD-like hydrolase superfamily. PhnX family. As to quaternary structure, homodimer. Requires Mg(2+) as cofactor.

It catalyses the reaction phosphonoacetaldehyde + H2O = acetaldehyde + phosphate + H(+). Involved in phosphonate degradation. This Pseudomonas entomophila (strain L48) protein is Phosphonoacetaldehyde hydrolase.